Consider the following 298-residue polypeptide: Inosose dehydratase 2 (298 aa).

It belongs to the IolE/MocC family. Glutathione serves as cofactor. Requires Co(2+) as cofactor. Mn(2+) is required as a cofactor.

The enzyme catalyses scyllo-inosose = 3D-3,5/4-trihydroxycyclohexane-1,2-dione + H2O. It participates in polyol metabolism; myo-inositol degradation into acetyl-CoA; acetyl-CoA from myo-inositol: step 2/7. Functionally, catalyzes the dehydration of inosose (2-keto-myo-inositol, 2KMI or 2,4,6/3,5-pentahydroxycyclohexanone) to 3D-(3,5/4)-trihydroxycyclohexane-1,2-dione (D-2,3-diketo-4-deoxy-epi-inositol). This is Inosose dehydratase 2 from Bacillus cereus (strain ZK / E33L).